Reading from the N-terminus, the 105-residue chain is Integration host factor subunit beta (105 aa).

The protein belongs to the bacterial histone-like protein family. As to quaternary structure, heterodimer of an alpha and a beta chain.

Its function is as follows. This protein is one of the two subunits of integration host factor, a specific DNA-binding protein that functions in genetic recombination as well as in transcriptional and translational control. In Bradyrhizobium sp. (strain ORS 278), this protein is Integration host factor subunit beta.